The sequence spans 412 residues: Serine hydroxymethyltransferase (412 aa).

(6S)-5,6,7,8-tetrahydrofolate contacts are provided by residues Leu120 and 124-126 (GHL). Lys229 carries the post-translational modification N6-(pyridoxal phosphate)lysine. Residue 352 to 354 (SPF) participates in (6S)-5,6,7,8-tetrahydrofolate binding.

It belongs to the SHMT family. As to quaternary structure, homodimer. Pyridoxal 5'-phosphate is required as a cofactor.

The protein localises to the cytoplasm. The catalysed reaction is (6R)-5,10-methylene-5,6,7,8-tetrahydrofolate + glycine + H2O = (6S)-5,6,7,8-tetrahydrofolate + L-serine. It participates in one-carbon metabolism; tetrahydrofolate interconversion. Its pathway is amino-acid biosynthesis; glycine biosynthesis; glycine from L-serine: step 1/1. Catalyzes the reversible interconversion of serine and glycine with tetrahydrofolate (THF) serving as the one-carbon carrier. This reaction serves as the major source of one-carbon groups required for the biosynthesis of purines, thymidylate, methionine, and other important biomolecules. Also exhibits THF-independent aldolase activity toward beta-hydroxyamino acids, producing glycine and aldehydes, via a retro-aldol mechanism. This is Serine hydroxymethyltransferase from Acetivibrio thermocellus (strain ATCC 27405 / DSM 1237 / JCM 9322 / NBRC 103400 / NCIMB 10682 / NRRL B-4536 / VPI 7372) (Clostridium thermocellum).